A 98-amino-acid polypeptide reads, in one-letter code: Protein Asterix (98 aa).

The next 2 helical transmembrane spans lie at 32–52 (LFSI…CLWV) and 78–98 (VSLS…NLFV).

It belongs to the Asterix family.

The protein resides in the membrane. This Dictyostelium discoideum (Social amoeba) protein is Protein Asterix.